We begin with the raw amino-acid sequence, 425 residues long: Dihydroorotase (425 aa).

2 residues coordinate Zn(2+): His-56 and His-58. Residues 58 to 60 (HYR) and Asn-90 contribute to the substrate site. 3 residues coordinate Zn(2+): Asp-148, His-175, and His-228. Residue Asn-274 coordinates substrate. Asp-301 serves as a coordination point for Zn(2+). Asp-301 is a catalytic residue. Residues His-305 and 319-320 (FG) contribute to the substrate site.

This sequence belongs to the metallo-dependent hydrolases superfamily. DHOase family. Class I DHOase subfamily. The cofactor is Zn(2+).

It carries out the reaction (S)-dihydroorotate + H2O = N-carbamoyl-L-aspartate + H(+). The protein operates within pyrimidine metabolism; UMP biosynthesis via de novo pathway; (S)-dihydroorotate from bicarbonate: step 3/3. Functionally, catalyzes the reversible cyclization of carbamoyl aspartate to dihydroorotate. The protein is Dihydroorotase of Lactobacillus gasseri (strain ATCC 33323 / DSM 20243 / BCRC 14619 / CIP 102991 / JCM 1131 / KCTC 3163 / NCIMB 11718 / NCTC 13722 / AM63).